Reading from the N-terminus, the 401-residue chain is Nodal homolog 3-A (401 aa).

The signal sequence occupies residues 1–18; sequence MAFLSLFLCLVFSSPLMA. A propeptide spanning residues 19–274 is cleaved from the precursor; sequence MPPALQGRKA…KVNGFRRLRR (256 aa). N-linked (GlcNAc...) asparagine glycans are attached at residues N168, N337, and N344. Intrachain disulfides connect C299–C365 and C328–C396.

Belongs to the TGF-beta family. Monomer. The propeptide region interacts with bmp4 in a non-covalent manner. As to expression, expressed in the dorsal marginal region of late blastula, becoming restricted to the Spemann organizer at the early gastrula stage.

Its subcellular location is the secreted. Its function is as follows. Exhibits mesoderm-dorsalizing activity and neural-inducing activity, but lacks mesoderm-inducing activity. Regulates the expression of specific mesodermal and neural genes. Induces convergent extension movements at the embryonic midline by activating the fgf signaling pathway to induce t/bra expression in the organizer region. Acts with wnt11 to induce Spemann organizer cells and induce axis formation. The unprocessed protein antagonizes bmp-signaling. The chain is Nodal homolog 3-A from Xenopus tropicalis (Western clawed frog).